Reading from the N-terminus, the 157-residue chain is MRVGLGYDVHKLVENRKLILGGVEIPYEKGLLGHSDADVLLHAIMDSLLGACALGDIGRHFPDTDNKFKGISSIKLLEEVNKLIIKNGYIINNIDSVIIAQKPKLAPYIENMRVNISNALNIEIDKINIKATTEEGLGFTGSMLGISSQSICSVIKK.

Residues aspartate 8 and histidine 10 each coordinate a divalent metal cation. Residues 8 to 10 and 34 to 35 contribute to the 4-CDP-2-C-methyl-D-erythritol 2-phosphate site; these read DVH and HS. Position 42 (histidine 42) interacts with a divalent metal cation. 4-CDP-2-C-methyl-D-erythritol 2-phosphate-binding positions include 56–58, 61–65, 132–135, and phenylalanine 139; these read DIG, FPDTD, and TTEE.

The protein belongs to the IspF family. Homotrimer. A divalent metal cation is required as a cofactor.

It carries out the reaction 4-CDP-2-C-methyl-D-erythritol 2-phosphate = 2-C-methyl-D-erythritol 2,4-cyclic diphosphate + CMP. It functions in the pathway isoprenoid biosynthesis; isopentenyl diphosphate biosynthesis via DXP pathway; isopentenyl diphosphate from 1-deoxy-D-xylulose 5-phosphate: step 4/6. In terms of biological role, involved in the biosynthesis of isopentenyl diphosphate (IPP) and dimethylallyl diphosphate (DMAPP), two major building blocks of isoprenoid compounds. Catalyzes the conversion of 4-diphosphocytidyl-2-C-methyl-D-erythritol 2-phosphate (CDP-ME2P) to 2-C-methyl-D-erythritol 2,4-cyclodiphosphate (ME-CPP) with a corresponding release of cytidine 5-monophosphate (CMP). The chain is 2-C-methyl-D-erythritol 2,4-cyclodiphosphate synthase from Clostridium botulinum (strain Alaska E43 / Type E3).